A 308-amino-acid chain; its full sequence is uncharacterized protein (308 aa).

Residues 212 to 242 (EADKMTIDYMRELDNLQRQYDGLVDEDKALH) are a coiled coil.

This is an uncharacterized protein from Ostreid herpesvirus 1 (isolate France) (OsHV-1).